Here is a 714-residue protein sequence, read N- to C-terminus: VIN3-like protein 2 (714 aa).

A PHD-type zinc finger spans residues 164-232 (RCSCCICRKY…CFYCVSCGKA (69 aa)). A Nuclear localization signal motif is present at residues 239–246 (WKKQLTIA). Residues 366 to 463 (GSTKIRFEDV…INVLTRSAEE (98 aa)) form the Fibronectin type-III domain. Positions 478-498 (LTNCSTLSSNPSSVEAESNND) are enriched in polar residues. Positions 478–530 (LTNCSTLSSNPSSVEAESNNDYIVPKKPSSKNEDNNSPSVDESAAKRMKRTTD) are disordered. The segment at 602-714 (SMKDNCNNGD…PSGFCMKLWH (113 aa)) is VIN3-Interacting Domain (VID).

As to quaternary structure, self-interacts. Interacts with VIN3 and VIL1. Component of the plant homeodomain / polycomb repressive complex 2 (PHD-PRC2) large complex during prolonged cold, composed of core PRC2 components (VRN2, EZA1, FIE and MSI1), and three related PHD finger proteins (VIL1, VIL2 and VIN3) that mediates histone H3 trimethylation on 'Lys-27' (H3K27me3).

The protein localises to the nucleus. In terms of biological role, maybe involved in both the vernalization and photoperiod pathways by regulating gene expression. Binds preferentially to dimethylated histone H3 'Lys-9' (H3K9me2). Promotes flowering in non-inductive photoperiods (e.g. short days) through the maintenance of the epigenetically repressed state of MAF5 via H3K9me2 and plant homeodomain / polycomb repressive complex 2 (PHD-PRC2)-dependent H3K27me3. The polypeptide is VIN3-like protein 2 (VIL2) (Arabidopsis thaliana (Mouse-ear cress)).